Consider the following 492-residue polypeptide: Glycylpeptide N-tetradecanoyltransferase (492 aa).

Residues 1–22 (MSDSKDRKGKAPEGQSSEKKDG) are compositionally biased toward basic and acidic residues. Positions 1 to 45 (MSDSKDRKGKAPEGQSSEKKDGAVNITPQMAESLLENNPALRNET) are disordered. Tetradecanoyl-CoA contacts are provided by residues 82-85 (YKFW), 215-217 (LCI), and 223-227 (SKRLT). The active-site Proton acceptor; via carboxylate is Leu-492.

The protein belongs to the NMT family. In terms of assembly, monomer.

Its subcellular location is the cytoplasm. It carries out the reaction N-terminal glycyl-[protein] + tetradecanoyl-CoA = N-tetradecanoylglycyl-[protein] + CoA + H(+). In terms of biological role, adds a myristoyl group to the N-terminal glycine residue of certain cellular proteins. The protein is Glycylpeptide N-tetradecanoyltransferase (nmt1) of Aspergillus fumigatus (strain ATCC MYA-4609 / CBS 101355 / FGSC A1100 / Af293) (Neosartorya fumigata).